An 84-amino-acid chain; its full sequence is GTP cyclohydrolase 1 feedback regulatory protein (84 aa).

Belongs to the GFRP family. As to quaternary structure, homopentamer. Forms a complex with GCH1 where a GCH1 homodecamer is sandwiched by two GFRP homopentamers.

Its subcellular location is the nucleus. The protein resides in the nucleus membrane. It is found in the cytoplasm. It localises to the cytosol. Mediates tetrahydrobiopterin inhibition of GTP cyclohydrolase 1. This Xenopus tropicalis (Western clawed frog) protein is GTP cyclohydrolase 1 feedback regulatory protein (gchfr).